The chain runs to 305 residues: Cytoplasmic envelopment protein 1 (305 aa).

This sequence belongs to the herpesviridae cytoplasmic envelopment protein 1 family.

The protein localises to the virion. The protein resides in the virion tegument. It localises to the host cytoplasm. Its subcellular location is the host Golgi apparatus. Plays a critical role in cytoplasmic virus egress. Participates in the final step of tegumentation and envelope acquisition within the host cytoplasm. In Gallus gallus (Chicken), this protein is Cytoplasmic envelopment protein 1 (MDV019).